Consider the following 271-residue polypeptide: Formamidopyrimidine-DNA glycosylase (271 aa).

The active-site Schiff-base intermediate with DNA is the Pro-2. The active-site Proton donor is Glu-3. The active-site Proton donor; for beta-elimination activity is the Lys-58. Residues His-92, Arg-111, and Arg-152 each coordinate DNA. The FPG-type zinc finger occupies 237–271; it reads FVYGRQQQPCKQCGSLLRQTTIRQRTTVWCGHCQG. The active-site Proton donor; for delta-elimination activity is the Arg-261.

Belongs to the FPG family. Monomer. Requires Zn(2+) as cofactor.

It catalyses the reaction Hydrolysis of DNA containing ring-opened 7-methylguanine residues, releasing 2,6-diamino-4-hydroxy-5-(N-methyl)formamidopyrimidine.. The catalysed reaction is 2'-deoxyribonucleotide-(2'-deoxyribose 5'-phosphate)-2'-deoxyribonucleotide-DNA = a 3'-end 2'-deoxyribonucleotide-(2,3-dehydro-2,3-deoxyribose 5'-phosphate)-DNA + a 5'-end 5'-phospho-2'-deoxyribonucleoside-DNA + H(+). In terms of biological role, involved in base excision repair of DNA damaged by oxidation or by mutagenic agents. Acts as a DNA glycosylase that recognizes and removes damaged bases. Has a preference for oxidized purines, such as 7,8-dihydro-8-oxoguanine (8-oxoG). Has AP (apurinic/apyrimidinic) lyase activity and introduces nicks in the DNA strand. Cleaves the DNA backbone by beta-delta elimination to generate a single-strand break at the site of the removed base with both 3'- and 5'-phosphates. The chain is Formamidopyrimidine-DNA glycosylase (mutM1) from Xylella fastidiosa (strain 9a5c).